Consider the following 250-residue polypeptide: Low affinity immunoglobulin gamma Fc region receptor III-A (250 aa).

Positions M1–A16 are cleaved as a signal peptide. Over D17–Q208 the chain is Extracellular. Ig-like C2-type domains are found at residues P23–H105 and P99–T189. 2 cysteine pairs are disulfide-bonded: C47-C89 and C128-C172. N56 and N63 each carry an N-linked (GlcNAc...) asparagine glycan. N180 is a glycosylation site (N-linked (GlcNAc...) asparagine). A helical transmembrane segment spans residues I209 to L225. At Y226–P250 the chain is on the cytoplasmic side.

As to quaternary structure, forms a heterooligomeric complex with ITAM-containing signaling subunits FCER1G. Interacts (via transmembrane domain) with signaling subunits; this interaction is a prerequisite for receptor complex expression on the cell surface and intracellular signal transduction. Binds the Fc region of antigen-complexed IgG. Expressed in gamma-delta T cells.

It localises to the cell membrane. Functionally, receptor for the invariable Fc fragment of immunoglobulin gamma (IgG). Optimally activated upon binding of clustered antigen-IgG complexes displayed on cell surfaces, triggers lysis of antibody-coated cells, a process known as antibody-dependent cellular cytotoxicity (ADCC). Does not bind free monomeric IgG, thus avoiding inappropriate effector cell activation in the absence of antigenic trigger. Mediates IgG effector functions on natural killer (NK) cells. Binds antigen-IgG complexes generated upon infection and triggers NK cell-dependent cytokine production and degranulation to limit viral load and propagation. Fc-binding subunit that associates with FCER1G adapters to form functional signaling complexes. Following the engagement of antigen-IgG complexes, triggers phosphorylation of immunoreceptor tyrosine-based activation motif (ITAM)-containing adapter with subsequent activation of phosphatidylinositol 3-kinase signaling and sustained elevation of intracellular calcium that ultimately drive NK cell activation. Mediates enhanced ADCC in response to afucosylated IgGs. The chain is Low affinity immunoglobulin gamma Fc region receptor III-A from Bos taurus (Bovine).